A 212-amino-acid polypeptide reads, in one-letter code: MTDLSDIRREYAKGGLRRADLPQNPMDLFELWMTQARDAELSDPTAMCVATVDEHGQPFQRIVLLKRFDDTGFVFFTNLGSRKAQQIAANNKVSLHFPWHPLERQVSVLGEAQALSTAEVLKYFMTRPKDSQIAAWVSQQSSKLSARQVLEGKFFEMKAKFAKGDVPLPSFWGGYLVRPSSIEFWQGGEHRLHDRFIYARHDAEWEIDRLAP.

Substrate contacts are provided by residues 8-11 (RREY) and lysine 66. FMN contacts are provided by residues 61–66 (RIVLLK), 76–77 (FT), arginine 82, lysine 83, and glutamine 105. The substrate site is built by tyrosine 123, arginine 127, and serine 131. Residues 140 to 141 (QS) and tryptophan 185 each bind FMN. A substrate-binding site is contributed by 191-193 (RLH). Residue arginine 195 participates in FMN binding.

The protein belongs to the pyridoxamine 5'-phosphate oxidase family. Homodimer. FMN is required as a cofactor.

The catalysed reaction is pyridoxamine 5'-phosphate + O2 + H2O = pyridoxal 5'-phosphate + H2O2 + NH4(+). The enzyme catalyses pyridoxine 5'-phosphate + O2 = pyridoxal 5'-phosphate + H2O2. The protein operates within cofactor metabolism; pyridoxal 5'-phosphate salvage; pyridoxal 5'-phosphate from pyridoxamine 5'-phosphate: step 1/1. It functions in the pathway cofactor metabolism; pyridoxal 5'-phosphate salvage; pyridoxal 5'-phosphate from pyridoxine 5'-phosphate: step 1/1. Catalyzes the oxidation of either pyridoxine 5'-phosphate (PNP) or pyridoxamine 5'-phosphate (PMP) into pyridoxal 5'-phosphate (PLP). The polypeptide is Pyridoxine/pyridoxamine 5'-phosphate oxidase (Shewanella baltica (strain OS223)).